The following is a 104-amino-acid chain: L-rhamnose mutarotase (104 aa).

A substrate-binding site is contributed by Tyr-18. His-22 (proton donor) is an active-site residue. Substrate contacts are provided by residues Tyr-41 and 76–77 (WW).

The protein belongs to the rhamnose mutarotase family. In terms of assembly, homodimer.

Its subcellular location is the cytoplasm. It catalyses the reaction alpha-L-rhamnose = beta-L-rhamnose. It functions in the pathway carbohydrate metabolism; L-rhamnose metabolism. Involved in the anomeric conversion of L-rhamnose. The polypeptide is L-rhamnose mutarotase (Escherichia coli O7:K1 (strain IAI39 / ExPEC)).